The chain runs to 201 residues: Adenylyl-sulfate kinase (201 aa).

35-42 (GLSGSGKS) is a binding site for ATP. The Phosphoserine intermediate role is filled by Ser109.

Belongs to the APS kinase family.

The catalysed reaction is adenosine 5'-phosphosulfate + ATP = 3'-phosphoadenylyl sulfate + ADP + H(+). It functions in the pathway sulfur metabolism; hydrogen sulfide biosynthesis; sulfite from sulfate: step 2/3. Functionally, catalyzes the synthesis of activated sulfate. This Salmonella typhi protein is Adenylyl-sulfate kinase.